Reading from the N-terminus, the 423-residue chain is MSQAFENAQQYIPGGVNSPVRAFKAVGGEPVFIKRAKGAYLYDINDKRYVDYVLSWGPMILGHADDDVLAAVTEKLQYGLSFGAPTEIETELAKKICNIMPGMDKVRFVSSGTEATMSAIRLARGYTGRDKIIKFEGCYHGHSDSLLIKAGSGALTFGVPSSPGVPACLAEHTVTLTYNNIEQVKQAFAEIGDQIACVIVEPVAGNMNCIPPIAGFLETLREECTKAGSLLILDEVMTGFRLGITGAQGYYGVQPDITTLGKVMGGGMPVGAFGGSKEVMDYIAPTGPVYQAGTLSGNPVAMAAGLATVQKLENPDFYAPLFAKTKTLCEGIQTLAKEAGIPLTGNYVGTMWGLFFTEEEKVTNYQQVMACDIPRFNKFFHGLLEEGVYIAPASYEAGFLSAAHTDADIDFTLQAAKNVFARI.

The residue at position 262 (Lys-262) is an N6-(pyridoxal phosphate)lysine.

It belongs to the class-III pyridoxal-phosphate-dependent aminotransferase family. HemL subfamily. In terms of assembly, homodimer. It depends on pyridoxal 5'-phosphate as a cofactor.

The protein localises to the cytoplasm. It catalyses the reaction (S)-4-amino-5-oxopentanoate = 5-aminolevulinate. Its pathway is porphyrin-containing compound metabolism; protoporphyrin-IX biosynthesis; 5-aminolevulinate from L-glutamyl-tRNA(Glu): step 2/2. The protein is Glutamate-1-semialdehyde 2,1-aminomutase of Saccharophagus degradans (strain 2-40 / ATCC 43961 / DSM 17024).